Here is a 391-residue protein sequence, read N- to C-terminus: Probable sugar efflux transporter (391 aa).

Helical transmembrane passes span 16–36, 51–71, 82–102, 110–130, 138–158, 170–190, 210–230, 247–267, 277–297, 300–320, 338–358, and 361–381; these read VFVF…PVAL, VGLM…PLML, LLFL…AWNF, MGIA…VIRV, QALG…LPLG, TFGV…KLLP, PLLV…FTTY, ITTL…FLFG, FIAF…VFKN, WVIF…TIAL, IFSG…SIVI, and LGLE…LFWL.

It belongs to the major facilitator superfamily. SotB (TC 2.A.1.2) family.

It is found in the cell inner membrane. Involved in the efflux of sugars. The physiological role may be the reduction of the intracellular concentration of toxic sugars or sugar metabolites. This is Probable sugar efflux transporter from Helicobacter pylori (strain J99 / ATCC 700824) (Campylobacter pylori J99).